A 274-amino-acid polypeptide reads, in one-letter code: MRKVHVQKYLLTFLGIVLSLLWISPFYIILVNSFKTKLELFTNTLSLPKSLMLDNYKTAAANLNLSEAFSNTLIITVFSILIIAIFSSMTAYALQRVKRKSSVIIYMIFTVAMLIPFQSVMIPLVAEFGKFHFLTRSGLVFMYLGFGSSLGVFLYYGALKGIPTSLDEAALIDGCSRFRIYWNIILPLLNPTTITLAVLDIMWIWNDYLLPSLVINKVGSRTLPLMIFYFFSQYTKQWNLGMAGLTIAILPVVIFYFLAQRKLVTAIIAGAVKQ.

6 helical membrane-spanning segments follow: residues 11 to 31 (LTFLGIVLSLLWISPFYIILV), 73 to 93 (LIITVFSILIIAIFSSMTAYA), 103 to 123 (VIIYMIFTVAMLIPFQSVMIP), 139 to 159 (LVFMYLGFGSSLGVFLYYGAL), 184 to 204 (IILPLLNPTTITLAVLDIMWI), and 238 to 258 (WNLGMAGLTIAILPVVIFYFL). Residues 69-259 (FSNTLIITVF…LPVVIFYFLA (191 aa)) form the ABC transmembrane type-1 domain.

Belongs to the binding-protein-dependent transport system permease family. MalFG subfamily.

The protein localises to the cell membrane. Its function is as follows. Probably part of a binding-protein-dependent transport system starch degradation products. Probably responsible for the translocation of the substrate across the membrane. The polypeptide is Probable starch degradation products transport system permease protein AmyC (amyC) (Thermoanaerobacterium thermosulfurigenes (Clostridium thermosulfurogenes)).